The chain runs to 292 residues: NAD kinase (292 aa).

The Proton acceptor role is filled by aspartate 73. NAD(+) contacts are provided by residues 73 to 74 (DG), 147 to 148 (NE), histidine 158, arginine 175, aspartate 177, 188 to 193 (TAYSLS), and glutamine 247.

This sequence belongs to the NAD kinase family. It depends on a divalent metal cation as a cofactor.

It localises to the cytoplasm. It catalyses the reaction NAD(+) + ATP = ADP + NADP(+) + H(+). Functionally, involved in the regulation of the intracellular balance of NAD and NADP, and is a key enzyme in the biosynthesis of NADP. Catalyzes specifically the phosphorylation on 2'-hydroxyl of the adenosine moiety of NAD to yield NADP. This chain is NAD kinase, found in Escherichia coli (strain SMS-3-5 / SECEC).